Reading from the N-terminus, the 230-residue chain is Demethylmenaquinone methyltransferase (230 aa).

S-adenosyl-L-methionine contacts are provided by residues T62, D80, 100–101 (DA), and S117.

It belongs to the class I-like SAM-binding methyltransferase superfamily. MenG/UbiE family.

The enzyme catalyses a 2-demethylmenaquinol + S-adenosyl-L-methionine = a menaquinol + S-adenosyl-L-homocysteine + H(+). It participates in quinol/quinone metabolism; menaquinone biosynthesis; menaquinol from 1,4-dihydroxy-2-naphthoate: step 2/2. Functionally, methyltransferase required for the conversion of demethylmenaquinol (DMKH2) to menaquinol (MKH2). This Mycobacterium sp. (strain KMS) protein is Demethylmenaquinone methyltransferase.